Reading from the N-terminus, the 414-residue chain is Serine--tRNA ligase (414 aa).

L-serine is bound at residue 230–232 (TAE). An ATP-binding site is contributed by 261–263 (RKE). Residue glutamate 284 coordinates L-serine. 348–351 (EISS) is a binding site for ATP. Serine 382 is an L-serine binding site.

It belongs to the class-II aminoacyl-tRNA synthetase family. Type-1 seryl-tRNA synthetase subfamily. Homodimer. The tRNA molecule binds across the dimer.

Its subcellular location is the cytoplasm. It carries out the reaction tRNA(Ser) + L-serine + ATP = L-seryl-tRNA(Ser) + AMP + diphosphate + H(+). It catalyses the reaction tRNA(Sec) + L-serine + ATP = L-seryl-tRNA(Sec) + AMP + diphosphate + H(+). It participates in aminoacyl-tRNA biosynthesis; selenocysteinyl-tRNA(Sec) biosynthesis; L-seryl-tRNA(Sec) from L-serine and tRNA(Sec): step 1/1. Catalyzes the attachment of serine to tRNA(Ser). Is also able to aminoacylate tRNA(Sec) with serine, to form the misacylated tRNA L-seryl-tRNA(Sec), which will be further converted into selenocysteinyl-tRNA(Sec). The polypeptide is Serine--tRNA ligase (Nitratiruptor sp. (strain SB155-2)).